A 74-amino-acid polypeptide reads, in one-letter code: ATP synthase subunit 9, mitochondrial (74 aa).

The next 2 helical transmembrane spans lie at 16-36 and 50-70; these read GLIG…LGVA and ILGF…AFLL.

The protein belongs to the ATPase C chain family. F-type ATPases have 2 components, CF(1) - the catalytic core - and CF(0) - the membrane proton channel. CF(1) has five subunits: alpha(3), beta(3), gamma(1), delta(1), epsilon(1). CF(0) has three main subunits: a, b and c.

It localises to the mitochondrion membrane. Functionally, mitochondrial membrane ATP synthase (F(1)F(0) ATP synthase or Complex V) produces ATP from ADP in the presence of a proton gradient across the membrane which is generated by electron transport complexes of the respiratory chain. F-type ATPases consist of two structural domains, F(1) - containing the extramembraneous catalytic core and F(0) - containing the membrane proton channel, linked together by a central stalk and a peripheral stalk. During catalysis, ATP synthesis in the catalytic domain of F(1) is coupled via a rotary mechanism of the central stalk subunits to proton translocation. Part of the complex F(0) domain. A homomeric c-ring of probably 10 subunits is part of the complex rotary element. This chain is ATP synthase subunit 9, mitochondrial (ATP9), found in Trichophyton rubrum (Athlete's foot fungus).